Here is a 649-residue protein sequence, read N- to C-terminus: Protein translocase subunit SecA 2 (649 aa).

ATP is bound by residues Gln105, 123-127 (GEGKT), and Asp535.

It belongs to the SecA family. Monomer and homodimer. Part of the essential Sec protein translocation apparatus which comprises SecA, SecYEG and auxiliary proteins SecDF-YajC and YidC.

The protein localises to the cell inner membrane. Its subcellular location is the cytoplasm. The catalysed reaction is ATP + H2O + cellular proteinSide 1 = ADP + phosphate + cellular proteinSide 2.. In terms of biological role, part of the Sec protein translocase complex. Interacts with the SecYEG preprotein conducting channel. Has a central role in coupling the hydrolysis of ATP to the transfer of proteins into and across the cell membrane, serving both as a receptor for the preprotein-SecB complex and as an ATP-driven molecular motor driving the stepwise translocation of polypeptide chains across the membrane. The sequence is that of Protein translocase subunit SecA 2 from Magnetococcus marinus (strain ATCC BAA-1437 / JCM 17883 / MC-1).